The chain runs to 917 residues: Coiled-coil domain-containing protein 186 (917 aa).

Disordered regions lie at residues 1-52, 97-118, and 701-769; these read MKIR…SGDE, SCAN…PGGD, and TQRR…SVAV. A compositionally biased stretch (basic and acidic residues) spans 33–44; it reads TTEKTSELRDDS. Residues 220–736 adopt a coiled-coil conformation; sequence RYLQQELTVK…TENGNHDKDI (517 aa). The span at 722–736 shows a compositional bias: basic and acidic residues; it reads RKLEQTENGNHDKDI. Over residues 737-748 the composition is skewed to low complexity; that stretch reads SSMGSRSSSSGS. Serine 759 carries the phosphoserine modification. Coiled-coil stretches lie at residues 778–822 and 874–913; these read AMLI…IQSY and KLQA…LEQR.

Expressed in postnatal germ cells.

This Mus musculus (Mouse) protein is Coiled-coil domain-containing protein 186 (Ccdc186).